The following is a 457-amino-acid chain: Siroheme synthase (457 aa).

The tract at residues 1–204 (MDHLPIFCQL…NDQKAITETT (204 aa)) is precorrin-2 dehydrogenase /sirohydrochlorin ferrochelatase. NAD(+) is bound by residues 22–23 (DV) and 43–44 (LA). A Phosphoserine modification is found at Ser128. The tract at residues 216 to 457 (GEVVLVGAGP…RDKLNWFSNH (242 aa)) is uroporphyrinogen-III C-methyltransferase. Residue Pro225 participates in S-adenosyl-L-methionine binding. Asp248 acts as the Proton acceptor in catalysis. The Proton donor role is filled by Lys270. S-adenosyl-L-methionine contacts are provided by residues 301 to 303 (GGD), Ile306, 331 to 332 (TA), Met382, and Gly411.

In the N-terminal section; belongs to the precorrin-2 dehydrogenase / sirohydrochlorin ferrochelatase family. The protein in the C-terminal section; belongs to the precorrin methyltransferase family.

It carries out the reaction uroporphyrinogen III + 2 S-adenosyl-L-methionine = precorrin-2 + 2 S-adenosyl-L-homocysteine + H(+). The catalysed reaction is precorrin-2 + NAD(+) = sirohydrochlorin + NADH + 2 H(+). The enzyme catalyses siroheme + 2 H(+) = sirohydrochlorin + Fe(2+). It functions in the pathway cofactor biosynthesis; adenosylcobalamin biosynthesis; precorrin-2 from uroporphyrinogen III: step 1/1. Its pathway is cofactor biosynthesis; adenosylcobalamin biosynthesis; sirohydrochlorin from precorrin-2: step 1/1. The protein operates within porphyrin-containing compound metabolism; siroheme biosynthesis; precorrin-2 from uroporphyrinogen III: step 1/1. It participates in porphyrin-containing compound metabolism; siroheme biosynthesis; siroheme from sirohydrochlorin: step 1/1. It functions in the pathway porphyrin-containing compound metabolism; siroheme biosynthesis; sirohydrochlorin from precorrin-2: step 1/1. In terms of biological role, multifunctional enzyme that catalyzes the SAM-dependent methylations of uroporphyrinogen III at position C-2 and C-7 to form precorrin-2 via precorrin-1. Then it catalyzes the NAD-dependent ring dehydrogenation of precorrin-2 to yield sirohydrochlorin. Finally, it catalyzes the ferrochelation of sirohydrochlorin to yield siroheme. This chain is Siroheme synthase, found in Escherichia coli O157:H7 (strain EC4115 / EHEC).